A 163-amino-acid polypeptide reads, in one-letter code: MTGKFTKEEVIGVVFSKLRPSPNDVFADIGCGSGAVTEFFAPYVRKAYAIDIEISDEARERLKRFDNVVLLEMDGKEFLKKYSPDVVFIGGTKGVEEMLEICNARRVVVNAARIEVALSAARKMREKGIFREIVLVNAAKSYELAGGLAFRSLNPVFVVFGER.

Residues Thr-6, 30–34 (GCGSG), Asp-51, and Gly-75 contribute to the S-adenosyl-L-methionine site.

The protein belongs to the methyltransferase superfamily. Archaeal-type CbiT family.

It carries out the reaction Co-precorrin-6B + S-adenosyl-L-methionine = Co-precorrin-7 + S-adenosyl-L-homocysteine + CO2. It participates in cofactor biosynthesis; adenosylcobalamin biosynthesis; cob(II)yrinate a,c-diamide from sirohydrochlorin (anaerobic route): step 8/10. Its function is as follows. Catalyzes the methylation of C-15 in cobalt-precorrin-6B followed by the decarboxylation of C-12 to form cobalt-precorrin-7. This Archaeoglobus fulgidus (strain ATCC 49558 / DSM 4304 / JCM 9628 / NBRC 100126 / VC-16) protein is Probable cobalt-precorrin-6B C(15)-methyltransferase (decarboxylating).